The primary structure comprises 172 residues: Co-chaperone protein HscB (172 aa).

The region spanning 2–74 (DYFTLFGLPI…LKRAEYMLSL (73 aa)) is the J domain.

It belongs to the HscB family. In terms of assembly, interacts with HscA and stimulates its ATPase activity. Interacts with IscU.

In terms of biological role, co-chaperone involved in the maturation of iron-sulfur cluster-containing proteins. Seems to help targeting proteins to be folded toward HscA. In Pectobacterium atrosepticum (strain SCRI 1043 / ATCC BAA-672) (Erwinia carotovora subsp. atroseptica), this protein is Co-chaperone protein HscB.